A 363-amino-acid polypeptide reads, in one-letter code: uncharacterized protein (363 aa).

7 helical membrane passes run 20-40, 63-83, 101-121, 141-161, 186-206, 227-247, and 268-288; these read WFFT…NTNI, INFA…FLVM, FPLI…GVQS, SVWQ…FTAF, FSLL…IMLA, IFKY…CVVL, and FLIV…WYVL. The disordered stretch occupies residues 329 to 363; that stretch reads PRADLTPNDTLHMESKKKPLSQSPRVVIEEEDVAE.

It localises to the membrane. This is an uncharacterized protein from Caenorhabditis elegans.